We begin with the raw amino-acid sequence, 144 residues long: Transcription antitermination protein NusB (144 aa).

Belongs to the NusB family.

Functionally, involved in transcription antitermination. Required for transcription of ribosomal RNA (rRNA) genes. Binds specifically to the boxA antiterminator sequence of the ribosomal RNA (rrn) operons. This is Transcription antitermination protein NusB from Carboxydothermus hydrogenoformans (strain ATCC BAA-161 / DSM 6008 / Z-2901).